A 453-amino-acid chain; its full sequence is Bifunctional protein GlmU (453 aa).

The pyrophosphorylase stretch occupies residues 1-225; the sequence is MNIVILAAGT…EWETLGVNSK (225 aa). Residues 6-9, lysine 20, glutamine 71, 76-77, 98-100, glycine 135, glutamate 150, asparagine 165, and asparagine 223 contribute to the UDP-N-acetyl-alpha-D-glucosamine site; these read LAAG, GT, and YGD. Position 100 (aspartate 100) interacts with Mg(2+). Asparagine 223 contacts Mg(2+). The interval 226–246 is linker; sequence AQLAELERIHQRNVADALLVD. Residues 247 to 453 form an N-acetyltransferase region; that stretch reads GVTLADPARV…GYVRPVKKKS (207 aa). Residues arginine 329 and lysine 347 each coordinate UDP-N-acetyl-alpha-D-glucosamine. Histidine 359 acts as the Proton acceptor in catalysis. 2 residues coordinate UDP-N-acetyl-alpha-D-glucosamine: tyrosine 362 and asparagine 373. Residues alanine 376, 382–383, serine 401, and alanine 419 each bind acetyl-CoA; that span reads NY.

It in the N-terminal section; belongs to the N-acetylglucosamine-1-phosphate uridyltransferase family. The protein in the C-terminal section; belongs to the transferase hexapeptide repeat family. As to quaternary structure, homotrimer. Mg(2+) is required as a cofactor.

It is found in the cytoplasm. The enzyme catalyses alpha-D-glucosamine 1-phosphate + acetyl-CoA = N-acetyl-alpha-D-glucosamine 1-phosphate + CoA + H(+). It catalyses the reaction N-acetyl-alpha-D-glucosamine 1-phosphate + UTP + H(+) = UDP-N-acetyl-alpha-D-glucosamine + diphosphate. It functions in the pathway nucleotide-sugar biosynthesis; UDP-N-acetyl-alpha-D-glucosamine biosynthesis; N-acetyl-alpha-D-glucosamine 1-phosphate from alpha-D-glucosamine 6-phosphate (route II): step 2/2. Its pathway is nucleotide-sugar biosynthesis; UDP-N-acetyl-alpha-D-glucosamine biosynthesis; UDP-N-acetyl-alpha-D-glucosamine from N-acetyl-alpha-D-glucosamine 1-phosphate: step 1/1. The protein operates within bacterial outer membrane biogenesis; LPS lipid A biosynthesis. Catalyzes the last two sequential reactions in the de novo biosynthetic pathway for UDP-N-acetylglucosamine (UDP-GlcNAc). The C-terminal domain catalyzes the transfer of acetyl group from acetyl coenzyme A to glucosamine-1-phosphate (GlcN-1-P) to produce N-acetylglucosamine-1-phosphate (GlcNAc-1-P), which is converted into UDP-GlcNAc by the transfer of uridine 5-monophosphate (from uridine 5-triphosphate), a reaction catalyzed by the N-terminal domain. This chain is Bifunctional protein GlmU, found in Burkholderia orbicola (strain AU 1054).